We begin with the raw amino-acid sequence, 444 residues long: Phosphoglucosamine mutase (444 aa).

Ser-104 acts as the Phosphoserine intermediate in catalysis. Mg(2+)-binding residues include Ser-104, Asp-243, Asp-245, and Asp-247. Ser-104 is modified (phosphoserine).

The protein belongs to the phosphohexose mutase family. It depends on Mg(2+) as a cofactor. Post-translationally, activated by phosphorylation.

It catalyses the reaction alpha-D-glucosamine 1-phosphate = D-glucosamine 6-phosphate. In terms of biological role, catalyzes the conversion of glucosamine-6-phosphate to glucosamine-1-phosphate. The polypeptide is Phosphoglucosamine mutase (Neisseria meningitidis serogroup C / serotype 2a (strain ATCC 700532 / DSM 15464 / FAM18)).